Consider the following 339-residue polypeptide: Type IV secretion system protein PtlH homolog (339 aa).

It belongs to the GSP E family.

In Bordetella parapertussis (strain 12822 / ATCC BAA-587 / NCTC 13253), this protein is Type IV secretion system protein PtlH homolog (ptlH).